A 79-amino-acid polypeptide reads, in one-letter code: Conotoxin 1 (79 aa).

Residues 1-22 (MKLTCVLIITVLFLTASQLITA) form the signal peptide. Positions 23-46 (DYSRDQRQYRAVRLGDEMRTFKGA) are excised as a propeptide. 3 cysteine pairs are disulfide-bonded: Cys49/Cys62, Cys56/Cys67, and Cys61/Cys77.

It belongs to the conotoxin O1 superfamily. As to expression, expressed by the venom duct.

It localises to the secreted. In Conus vexillum (Flag cone), this protein is Conotoxin 1.